Consider the following 160-residue polypeptide: Large ribosomal subunit protein uL11 (160 aa).

The protein belongs to the universal ribosomal protein uL11 family. As to quaternary structure, part of the ribosomal stalk of the 50S ribosomal subunit. Interacts with L10 and the large rRNA to form the base of the stalk. L10 forms an elongated spine to which L12 dimers bind in a sequential fashion forming a multimeric L10(L12)X complex.

Its function is as follows. Forms part of the ribosomal stalk which helps the ribosome interact with GTP-bound translation factors. The protein is Large ribosomal subunit protein uL11 of Methanococcus aeolicus (strain ATCC BAA-1280 / DSM 17508 / OCM 812 / Nankai-3).